The following is a 146-amino-acid chain: MAIELHDLKPAPGAHKAKTRVGRGEGSKGKTAGRGTKGTGARKNVPEFFAGGQMPIHMQAPKLGGFHNPFRTEYQVVNLDKVEALFPKGGKITVDDLVSVGAVRDNELVKVLGTGELTVKVDLVVDAWSKSAQEKIEKAGGSVTKR.

The disordered stretch occupies residues 1–46 (MAIELHDLKPAPGAHKAKTRVGRGEGSKGKTAGRGTKGTGARKNVP). The span at 29–43 (GKTAGRGTKGTGARK) shows a compositional bias: low complexity.

The protein belongs to the universal ribosomal protein uL15 family. Part of the 50S ribosomal subunit.

Binds to the 23S rRNA. This chain is Large ribosomal subunit protein uL15, found in Cutibacterium acnes (strain DSM 16379 / KPA171202) (Propionibacterium acnes).